Reading from the N-terminus, the 108-residue chain is Ig kappa chain V-V region NQ5-89.4 (108 aa).

The interval 1 to 23 (DIQMTQTTSSLSASLGHRVTITC) is framework-1. Cys23 and Cys88 are joined by a disulfide. A complementarity-determining-1 region spans residues 24-34 (SASQDISNYLN). Residues 35–49 (WYQQKPDGTVKLLIY) form a framework-2 region. Residues 50–56 (YTSRLHS) form a complementarity-determining-2 region. Residues 57 to 88 (GVPSRFSGSGSATDYSLTITNLQQEDXATYXC) are framework-3. The interval 89–97 (QQGNTLPYT) is complementarity-determining-3. A framework-4 region spans residues 98–107 (FGGGTKLXIK).

Functionally, anti-2-phenyl oxazolone (PHOX) Antibody. The sequence is that of Ig kappa chain V-V region NQ5-89.4 from Mus musculus (Mouse).